Reading from the N-terminus, the 571-residue chain is MRTSKYLLSTLKETPNDAEVVSHQLMLRAGMIRKLASGLYTWLPTGLRVLRKVENIVRQEIDNAGAIETLMPVVQPFELWEETGRSEKMGPELLRFTDRHVRPFVLSPTAEEVITALVRNEVSSYKQLPINLYQIQTKFRDERRPRFGVMRAREFCMMDAYSFDIDKAGLEKSYQAMHDAYCKAFDRMGLEYRPVLADSGAIGGNGSQEFHVLAESGEDLIAFSTESDYAANIEKAEAVAPAVERAAPTQEMTLVDTPNAKTIAELVEQHGIAIEKTVKTLFVKASDAIEAPIVALIIRGDHELNEIKAENLAEVATPLEMATEEEMRELIGAGAGSLGPVGLKLPFIVDRSVAVMSDFGAGANIDGKHYFGINWGRDVELGQVADLRNVVEGDPSPCGKGTLMLKRGIEVGHIFQLGNVYSEAMNCGVLDSNGKNVILEMGCYGIGVSRVVAAAIEQNNDKYGIIWPDALAPFQVAIVPMNMHKSERVQEAAEKLYAELTAMGIEVLFDDRKERPGVMFSDMELIGIPHTIVIGDRSMDEGHFEYKNRRSGEKTPVAMADIVEHIKAQLK.

Belongs to the class-II aminoacyl-tRNA synthetase family. ProS type 1 subfamily. In terms of assembly, homodimer.

Its subcellular location is the cytoplasm. The enzyme catalyses tRNA(Pro) + L-proline + ATP = L-prolyl-tRNA(Pro) + AMP + diphosphate. Its function is as follows. Catalyzes the attachment of proline to tRNA(Pro) in a two-step reaction: proline is first activated by ATP to form Pro-AMP and then transferred to the acceptor end of tRNA(Pro). As ProRS can inadvertently accommodate and process non-cognate amino acids such as alanine and cysteine, to avoid such errors it has two additional distinct editing activities against alanine. One activity is designated as 'pretransfer' editing and involves the tRNA(Pro)-independent hydrolysis of activated Ala-AMP. The other activity is designated 'posttransfer' editing and involves deacylation of mischarged Ala-tRNA(Pro). The misacylated Cys-tRNA(Pro) is not edited by ProRS. The polypeptide is Proline--tRNA ligase (Vibrio vulnificus (strain CMCP6)).